A 315-amino-acid polypeptide reads, in one-letter code: 2-oxoglutarate and iron-dependent oxygenase domain-containing protein 3 (315 aa).

A disordered region spans residues 1 to 31 (MAPQRRGPPRIPEGSSAAERRRATSTKKDRL). Topologically, residues 1 to 41 (MAPQRRGPPRIPEGSSAAERRRATSTKKDRLPREAQRTWLR) are cytoplasmic. Residues 18 to 31 (AERRRATSTKKDRL) are compositionally biased toward basic and acidic residues. The chain crosses the membrane as a helical; Signal-anchor for type II membrane protein span at residues 42–62 (IVAFGVGLALVTCLLWSSVGI). The Lumenal segment spans residues 63 to 315 (DDDVAEVVAR…DHGIEDPVLT (253 aa)). One can recognise a Fe2OG dioxygenase domain in the interval 203 to 305 (KPTFFSRINS…AITIAFTCNP (103 aa)). The N-linked (GlcNAc...) asparagine glycan is linked to N211. Fe cation is bound by residues H226 and D228. N263 is a glycosylation site (N-linked (GlcNAc...) asparagine). Residue H284 participates in Fe cation binding. R294 is an active-site residue. R294 lines the 2-oxoglutarate pocket.

The protein belongs to the OGFOD3 family. Fe(2+) is required as a cofactor. The cofactor is L-ascorbate.

It localises to the membrane. This chain is 2-oxoglutarate and iron-dependent oxygenase domain-containing protein 3 (Ogfod3), found in Mus musculus (Mouse).